Consider the following 155-residue polypeptide: S-ribosylhomocysteine lyase (155 aa).

Positions 54, 58, and 122 each coordinate Fe cation.

This sequence belongs to the LuxS family. In terms of assembly, homodimer. Fe cation serves as cofactor.

The enzyme catalyses S-(5-deoxy-D-ribos-5-yl)-L-homocysteine = (S)-4,5-dihydroxypentane-2,3-dione + L-homocysteine. In terms of biological role, involved in the synthesis of autoinducer 2 (AI-2) which is secreted by bacteria and is used to communicate both the cell density and the metabolic potential of the environment. The regulation of gene expression in response to changes in cell density is called quorum sensing. Catalyzes the transformation of S-ribosylhomocysteine (RHC) to homocysteine (HC) and 4,5-dihydroxy-2,3-pentadione (DPD). The protein is S-ribosylhomocysteine lyase of Deinococcus deserti (strain DSM 17065 / CIP 109153 / LMG 22923 / VCD115).